Here is a 465-residue protein sequence, read N- to C-terminus: 3-isopropylmalate dehydratase large subunit (465 aa).

Residues cysteine 347, cysteine 407, and cysteine 410 each coordinate [4Fe-4S] cluster.

This sequence belongs to the aconitase/IPM isomerase family. LeuC type 1 subfamily. As to quaternary structure, heterodimer of LeuC and LeuD. The cofactor is [4Fe-4S] cluster.

The catalysed reaction is (2R,3S)-3-isopropylmalate = (2S)-2-isopropylmalate. It participates in amino-acid biosynthesis; L-leucine biosynthesis; L-leucine from 3-methyl-2-oxobutanoate: step 2/4. Its function is as follows. Catalyzes the isomerization between 2-isopropylmalate and 3-isopropylmalate, via the formation of 2-isopropylmaleate. The protein is 3-isopropylmalate dehydratase large subunit of Aeromonas salmonicida (strain A449).